Reading from the N-terminus, the 474-residue chain is Ribulose bisphosphate carboxylase large chain (474 aa).

Positions 123 and 173 each coordinate substrate. K175 serves as the catalytic Proton acceptor. K177 contributes to the substrate binding site. Mg(2+) is bound by residues K201, D203, and E204. N6-carboxylysine is present on K201. The active-site Proton acceptor is the H293. Substrate is bound by residues R294, H326, and S378.

This sequence belongs to the RuBisCO large chain family. Type I subfamily. In terms of assembly, heterohexadecamer of 8 large chains and 8 small chains; disulfide-linked. The disulfide link is formed within the large subunit homodimers. Requires Mg(2+) as cofactor. Post-translationally, the disulfide bond which can form in the large chain dimeric partners within the hexadecamer appears to be associated with oxidative stress and protein turnover.

It localises to the carboxysome. The catalysed reaction is 2 (2R)-3-phosphoglycerate + 2 H(+) = D-ribulose 1,5-bisphosphate + CO2 + H2O. It carries out the reaction D-ribulose 1,5-bisphosphate + O2 = 2-phosphoglycolate + (2R)-3-phosphoglycerate + 2 H(+). Its function is as follows. RuBisCO catalyzes two reactions: the carboxylation of D-ribulose 1,5-bisphosphate, the primary event in carbon dioxide fixation, as well as the oxidative fragmentation of the pentose substrate in the photorespiration process. Both reactions occur simultaneously and in competition at the same active site. In Synechococcus sp, this protein is Ribulose bisphosphate carboxylase large chain.